Consider the following 305-residue polypeptide: Glycine--tRNA ligase alpha subunit (305 aa).

It belongs to the class-II aminoacyl-tRNA synthetase family. Tetramer of two alpha and two beta subunits.

The protein resides in the cytoplasm. It carries out the reaction tRNA(Gly) + glycine + ATP = glycyl-tRNA(Gly) + AMP + diphosphate. In Streptococcus pneumoniae (strain Hungary19A-6), this protein is Glycine--tRNA ligase alpha subunit.